The following is a 316-amino-acid chain: MNQLECLKKYTDIVVDSGDLVSINKFKLGDVTTNPSLIRQVMSLQKYQYIIYDSIRYAKKKGGSHKFKLENAIDKVSVILGSEILKNISGKISTEIDSRLSFNTNLCIERAKKLISMYEEHDIHRDRVLIKLAATWESVSAAKELKKENIQSNLTLLFSFAQAKICAEAGVFLISPFVGRIYDWYKSKSLIKSAMIDDDPGVNAVRKIYQYYKEYGYHTIIMGASFRNVDQVLALSGCDRLTISPNLLHKLQLSDDLVIRKLIPPKHKKLQPVCMSKSEFCWFHNEDAMAVEKLSEGIRQFGKDQQELENIINNNF.

The active-site Schiff-base intermediate with substrate is Lys131.

The protein belongs to the transaldolase family. Type 1 subfamily. Homodimer.

The protein resides in the cytoplasm. It catalyses the reaction D-sedoheptulose 7-phosphate + D-glyceraldehyde 3-phosphate = D-erythrose 4-phosphate + beta-D-fructose 6-phosphate. It functions in the pathway carbohydrate degradation; pentose phosphate pathway; D-glyceraldehyde 3-phosphate and beta-D-fructose 6-phosphate from D-ribose 5-phosphate and D-xylulose 5-phosphate (non-oxidative stage): step 2/3. Its function is as follows. Transaldolase is important for the balance of metabolites in the pentose-phosphate pathway. The chain is Transaldolase from Buchnera aphidicola subsp. Baizongia pistaciae (strain Bp).